Consider the following 224-residue polypeptide: EF-hand calcium-binding domain-containing protein 1 (224 aa).

An N-terminal signal peptide occupies residues 1–21 (MKVSLLLLALVLVCLVQGSES). The region spanning 115-150 (IAHPDFMKAYSIADVDGDGELSPKEFYNGPYVFEMD) is the EF-hand domain. Ca(2+) is bound by residues D128, D130, D132, E134, and E139.

In terms of tissue distribution, component of the acid-soluble organic matrix of calcified layers of the shell (at protein level).

The protein resides in the secreted. This chain is EF-hand calcium-binding domain-containing protein 1, found in Lottia gigantea (Giant owl limpet).